A 776-amino-acid chain; its full sequence is Zinc finger CCCH-type antiviral protein 1 (776 aa).

An N-acetylalanine modification is found at alanine 2. The segment at 2–254 (ADPGVCCFIT…DRSKSRDRFL (253 aa)) is N-terminal domain. A Nuclear localization signal motif is present at residues 69 to 76 (RARVCRRK). 4 consecutive C3H1-type zinc fingers follow at residues 73–86 (CRRK…DSLH), 88–110 (CKLN…KYSH), 150–172 (CKSY…ERLH), and 169–193 (ERLH…SHNL). Positions 221 to 249 (NKHARRNPPGTRAAHPHRRGGAHRDRSKS) are disordered. A binding to EXOSC5 region spans residues 224 to 254 (ARRNPPGTRAAHPHRRGGAHRDRSKSRDRFL). 4 positions are modified to phosphoserine; by GSK3-beta: serine 257, serine 262, serine 266, and serine 270. A Phosphoserine modification is found at serine 274. Threonine 278 bears the Phosphothreonine mark. Serine 283 bears the Phosphoserine mark. A Nuclear export signal motif is present at residues 284-291 (LEDVSVDV). Residues 308–355 (PVSSKAAGVQGPSQMRASQEFSEDGNLDDIFSRNRSDSSSSRASAAKV) form a disordered region. Over residues 318–327 (GPSQMRASQE) the composition is skewed to polar residues. Serine 325, serine 351, and serine 398 each carry phosphoserine. Over residues 344-353 (DSSSSRASAA) the composition is skewed to low complexity. The Nuclear localization signal signature appears at 405–406 (KK). Residues 457 to 483 (WASASTHNAPNGSSQIMDETPNVSKSS) are disordered. Residues 459-483 (SASTHNAPNGSSQIMDETPNVSKSS) are compositionally biased toward polar residues. Tyrosine 501 carries the post-translational modification Phosphotyrosine. The disordered stretch occupies residues 512 to 562 (LAVPGEATTPVQSNRLPQSPLSSSSHRAAASGSPGKNSTHTSVSPAIESSR). Positions 523 to 546 (QSNRLPQSPLSSSSHRAAASGSPG) are enriched in low complexity. A phosphoserine mark is found at serine 544 and serine 667. The region spanning 671 to 758 (YEEKPLSAVF…ASKTQRHVVR (88 aa)) is the WWE domain.

It belongs to the ARTD/PARP family. In terms of assembly, homodimer or homooligomer. Homooligomerization is essential for its antiviral activity. Interacts with EXOSC5. Interacts with EXOSC3, EXOSC7, DCP2 and DCP1A. Interacts with PARN in an RNA-independent manner. Interacts with XRN1 in an RNA-dependent manner. Interacts (via N-terminal domain) with DHX30 (via N-terminus) in an RNA-independent manner. Interacts (via N-terminal domain) with DDX17 in an RNA-independent manner. Phosphorylation at Ser-274 is essential for sequential phosphorylation of Ser-270, Ser-266, Ser-262 and Ser-257 by GSK3-beta. Phosphorylation by GSK3-beta enhances its antiviral activity. As to expression, expressed in the kidney and liver.

It localises to the cytoplasm. The protein resides in the nucleus. Antiviral protein which inhibits the replication of viruses by recruiting the cellular RNA degradation machineries to degrade the viral mRNAs. Binds to a ZAP-responsive element (ZRE) present in the target viral mRNA, recruits cellular poly(A)-specific ribonuclease PARN to remove the poly(A) tail, and the 3'-5' exoribonuclease complex exosome to degrade the RNA body from the 3'-end. It also recruits the decapping complex DCP1-DCP2 through RNA helicase p72 (DDX17) to remove the cap structure of the viral mRNA to initiate its degradation from the 5'-end. Its target viruses belong to families which include retroviridae: human immunodeficiency virus type 1 (HIV-1) and moloney and murine leukemia virus (MoMLV), filoviridae: ebola virus (EBOV) and marburg virus (MARV), togaviridae: sindbis virus (SINV) and Ross river virus (RRV). Specifically targets the multiply spliced but not unspliced or singly spliced HIV-1 mRNAs for degradation. The polypeptide is Zinc finger CCCH-type antiviral protein 1 (Zc3hav1) (Rattus norvegicus (Rat)).